We begin with the raw amino-acid sequence, 436 residues long: Succinyl-CoA:glutarate CoA-transferase (436 aa).

The N-terminal 8 residues, 1–8 (MLWMLARA), are a transit peptide targeting the mitochondrion. Asp203 acts as the Nucleophile in catalysis. Lys392 and Lys423 each carry N6-acetyllysine.

It belongs to the CoA-transferase III family.

The protein localises to the mitochondrion. It carries out the reaction glutarate + succinyl-CoA = glutaryl-CoA + succinate. It catalyses the reaction 3-hydroxy-3-methylglutarate + succinyl-CoA = (3S)-3-hydroxy-3-methylglutaryl-CoA + succinate. The catalysed reaction is 3-hydroxy-3-methylglutarate + glutaryl-CoA = (3S)-3-hydroxy-3-methylglutaryl-CoA + glutarate. The enzyme catalyses hexanedioate + glutaryl-CoA = hexanedioyl-CoA + glutarate. It carries out the reaction itaconate + glutaryl-CoA = itaconyl-CoA + glutarate. It catalyses the reaction itaconate + succinyl-CoA = itaconyl-CoA + succinate. In terms of biological role, coenzyme A (CoA) transferase that reversibly catalyzes the transfer of a CoA moiety from a dicarboxyl-CoA to a dicarboxylate in a metabolite recycling process. Displays preference for succinyl-CoA and glutarate-CoA as dicarboxyl-CoA donors and glutarate, succinate, adipate/hexanedioate, itaconate and 3-hydroxy-3-methylglutarate as dicarboxylate acceptors. Acts on intermediates or end products of lysine and tryptophan degradation pathway, in particular catalyzes succinyl-CoA-dependent reesterification of free glutarate into glutaryl-CoA to prevent renal excretion of glutarate. Upon inflammation, may convert macrophage-derived itaconate to itaconyl-CoA in erythroid precursors where it negatively regulates the TCA cycle and heme synthesis to limit erythroid differentiation in the context of stress erythropoiesis. The protein is Succinyl-CoA:glutarate CoA-transferase of Mus musculus (Mouse).